The following is a 351-amino-acid chain: Probable inactive tRNA-specific adenosine deaminase-like protein 3 (351 aa).

Methionine 1 carries the post-translational modification N-acetylmethionine. Positions 1–26 (MEPAPGLVEQPKCLEAGSPEPEPAPW) are disordered. The CMP/dCMP-type deaminase domain maps to 171-336 (AAMQSHMERA…PDLNHRFQVF (166 aa)). Zn(2+) is bound by residues histidine 223, cysteine 291, and cysteine 294.

The protein belongs to the cytidine and deoxycytidylate deaminase family. ADAT3 subfamily. The cofactor is Zn(2+).

This is Probable inactive tRNA-specific adenosine deaminase-like protein 3 (ADAT3) from Homo sapiens (Human).